Consider the following 367-residue polypeptide: tRNA uridine(34) hydroxylase (367 aa).

One can recognise a Rhodanese domain in the interval 159–253; that stretch reads EDENSIVVDV…YAHEVSQKGL (95 aa). Catalysis depends on Cys-213, which acts as the Cysteine persulfide intermediate.

Belongs to the TrhO family.

The enzyme catalyses uridine(34) in tRNA + AH2 + O2 = 5-hydroxyuridine(34) in tRNA + A + H2O. Functionally, catalyzes oxygen-dependent 5-hydroxyuridine (ho5U) modification at position 34 in tRNAs. The sequence is that of tRNA uridine(34) hydroxylase from Leptospira interrogans serogroup Icterohaemorrhagiae serovar Lai (strain 56601).